The chain runs to 450 residues: Probable ECA polymerase (450 aa).

Helical transmembrane passes span F6–F26, V37–L57, V63–A83, V118–L138, G155–L175, A181–G201, I207–W227, M228–Y248, L341–I361, Y378–A398, and V410–F430.

This sequence belongs to the WzyE family. In terms of assembly, probably part of a complex composed of WzxE, WzyE and WzzE.

The protein localises to the cell inner membrane. Its pathway is bacterial outer membrane biogenesis; enterobacterial common antigen biosynthesis. Its function is as follows. Probably involved in the polymerization of enterobacterial common antigen (ECA) trisaccharide repeat units. The chain is Probable ECA polymerase from Escherichia coli O17:K52:H18 (strain UMN026 / ExPEC).